Here is a 256-residue protein sequence, read N- to C-terminus: tRNA-cytidine(32) 2-sulfurtransferase (256 aa).

A PP-loop motif motif is present at residues 35–40 (SGGKDS). [4Fe-4S] cluster is bound by residues Cys-110, Cys-113, and Cys-201.

Belongs to the TtcA family. In terms of assembly, homodimer. Requires Mg(2+) as cofactor. The cofactor is [4Fe-4S] cluster.

The protein resides in the cytoplasm. It catalyses the reaction cytidine(32) in tRNA + S-sulfanyl-L-cysteinyl-[cysteine desulfurase] + AH2 + ATP = 2-thiocytidine(32) in tRNA + L-cysteinyl-[cysteine desulfurase] + A + AMP + diphosphate + H(+). The protein operates within tRNA modification. Its function is as follows. Catalyzes the ATP-dependent 2-thiolation of cytidine in position 32 of tRNA, to form 2-thiocytidine (s(2)C32). The sulfur atoms are provided by the cysteine/cysteine desulfurase (IscS) system. This is tRNA-cytidine(32) 2-sulfurtransferase from Coxiella burnetii (strain CbuG_Q212) (Coxiella burnetii (strain Q212)).